The chain runs to 1085 residues: Solute carrier family 12 member 4 (1085 aa).

The Cytoplasmic portion of the chain corresponds to 1 to 119 (MPHFTVVPVD…RRAAKAPSMG (119 aa)). Phosphoserine is present on residues Ser-24, Ser-47, Ser-81, and Ser-88. A discontinuously helical membrane pass occupies residues 120-141 (TLMGVYLPCLQNIFGVILFLRL). The K(+) site is built by Asn-131 and Ile-132. Residues 142–149 (TWMVGTAG) lie on the Extracellular side of the membrane. A helical membrane pass occupies residues 150–172 (VLQALLIVLICCCCTLLTAISMS). The Cytoplasmic segment spans residues 173-196 (AIATNGVVPAGGSYFMISRSLGPE). The helical transmembrane segment at 197–225 (FGGAVGLCFYLGTTFAAAMYILGAIEILL) threads the bilayer. Tyr-216 is a binding site for K(+). The Extracellular segment spans residues 226–248 (TYIAPPAAIFYPSGTHDMSSATL). 2 helical membrane-spanning segments follow: residues 249 to 271 (NNMR…VGVK) and 272 to 297 (YVNK…GGIK). Over 298 to 419 (SIFDPPVFPV…LYVVADIATS (122 aa)) the chain is Extracellular. Cys-308 and Cys-323 are disulfide-bonded. 3 N-linked (GlcNAc...) asparagine glycosylation sites follow: Asn-312, Asn-331, and Asn-347. Cys-343 and Cys-353 are joined by a disulfide. The chain crosses the membrane as a helical span at residues 420-440 (FTVLVGIFFPSVTGIMAGSNR). The K(+) site is built by Pro-429 and Thr-432. Positions 433, 434, and 435 each coordinate chloride. Topologically, residues 441 to 450 (SGDLRDAQKS) are cytoplasmic. Residues 451–473 (IPVGTILAIVTTSLVYFSSVILF) traverse the membrane as a helical segment. Residues 474–504 (GACIEGVVLRDKYGDGVSRNLVVGTLAWPSP) are Extracellular-facing. Residues 505–531 (WVIVVGSFFSTCGAGLQSLTGAPRLLQ) form a helical membrane-spanning segment. At 532-554 (AIAKDNIIPFLRVFGHGKANGEP) the chain is on the cytoplasmic side. Transmembrane regions (helical) follow at residues 555 to 575 (TWAL…ASLD) and 576 to 598 (MVAP…ACAV). A chloride-binding site is contributed by Tyr-589. Over 599-612 (QTLLRTPNWRPRFK) the chain is Cytoplasmic. A run of 2 helical transmembrane segments spans residues 613–635 (YYHW…VSSW) and 636–651 (YYAL…IYKY). Residues 652-1085 (IEYQGAEKEW…GGREVITIYS (434 aa)) lie on the Cytoplasmic side of the membrane. The interval 665–681 (IRGLSLSAARYALLRLE) is scissor helix. 5 residues coordinate ATP: Leu-697, Lys-699, Lys-707, Tyr-708, and Val-730. Ser-734 is subject to Phosphoserine. Residues Gly-794, Trp-795, and Tyr-797 each coordinate ATP. Residues Ser-916 and Ser-967 each carry the phosphoserine modification. Thr-983 carries the post-translational modification Phosphothreonine. Ser-1050 is subject to Phosphoserine.

The protein belongs to the SLC12A transporter family. K/Cl co-transporter subfamily. As to quaternary structure, homodimer; adopts a domain-swap conformation at the scissor helices connecting the transmembrane domain and C-terminal domain. Heterodimer with other K-Cl cotransporters. Post-translationally, phosphorylated, phosphorylation may regulate transporter activity. As to expression, detected in embryo, adult heart, erythrocytes, brain, kidney, stomach, ovary, testis and liver.

It is found in the cell membrane. The enzyme catalyses K(+)(in) + chloride(in) = K(+)(out) + chloride(out). Inhibited by WNK3. In terms of biological role, mediates electroneutral potassium-chloride cotransport when activated by cell swelling. May contribute to cell volume homeostasis in single cells. May be involved in the regulation of basolateral Cl(-) exit in NaCl absorbing epithelia. This chain is Solute carrier family 12 member 4 (Slc12a4), found in Mus musculus (Mouse).